The primary structure comprises 399 residues: MSKEKIAIAYSGGLDTSVMIKWLKDKYDADIVAVTGNLGQQKEIENLESKALATGASSFHFVDLRTEFVEEYIWRALKAGALYEDVYPLATALGRPLLAKALVDVAVAENCTMLAHGCTGKGNDQVRFEVTFASLAPHMKILAPLRVWEFTSREAEIAYAMEHNIPVSATKKNPYSVDENIWGISIECGVLEDPMIAPPEDAYQITTSPEKAPDTPAVVELEFVEGVPVAMDGKKMNGLDIIVQLNTIGAAHGIGRLDMIENRVVGIKSREIYEAPAATILHFAHRELERLTLEKSVFQYKKNISQDYANIIYNGTWFSPLRTSLDAFVNETQKPVTGLVRLKLYKGNVTLLGRTSPYSLYNEALATYTEADTFNHKAAEGFIHLYGLGLKTFNQIHKG.

Residue A9–S17 participates in ATP binding. Residue Y87 coordinates L-citrulline. G117 is a binding site for ATP. T119, N123, and D124 together coordinate L-aspartate. N123 is a binding site for L-citrulline. Residues R127, S176, S185, E261, and Y273 each coordinate L-citrulline.

This sequence belongs to the argininosuccinate synthase family. Type 1 subfamily. Homotetramer.

The protein resides in the cytoplasm. It carries out the reaction L-citrulline + L-aspartate + ATP = 2-(N(omega)-L-arginino)succinate + AMP + diphosphate + H(+). It functions in the pathway amino-acid biosynthesis; L-arginine biosynthesis; L-arginine from L-ornithine and carbamoyl phosphate: step 2/3. This Chlorobium chlorochromatii (strain CaD3) protein is Argininosuccinate synthase.